The sequence spans 331 residues: 6-phosphogluconolactonase (331 aa).

It belongs to the cycloisomerase 2 family.

It carries out the reaction 6-phospho-D-glucono-1,5-lactone + H2O = 6-phospho-D-gluconate + H(+). The protein operates within carbohydrate degradation; pentose phosphate pathway; D-ribulose 5-phosphate from D-glucose 6-phosphate (oxidative stage): step 2/3. Catalyzes the hydrolysis of 6-phosphogluconolactone to 6-phosphogluconate. The sequence is that of 6-phosphogluconolactonase from Klebsiella pneumoniae subsp. pneumoniae (strain ATCC 700721 / MGH 78578).